The following is a 383-amino-acid chain: GDSL esterase/lipase At1g28610 (383 aa).

A signal peptide spans 1–22 (MASLDSLVSFFLSTLFVTIVSS). The active-site Nucleophile is serine 38. 3 N-linked (GlcNAc...) asparagine glycosylation sites follow: asparagine 134, asparagine 184, and asparagine 315. Catalysis depends on residues aspartate 340 and histidine 343.

It belongs to the 'GDSL' lipolytic enzyme family.

Its subcellular location is the secreted. The sequence is that of GDSL esterase/lipase At1g28610 from Arabidopsis thaliana (Mouse-ear cress).